Consider the following 46-residue polypeptide: METSSPALSIAITILIVLLGLTAFGVYTAFGPPNRALDDPWDDHDD.

A helical membrane pass occupies residues 10 to 30 (IAITILIVLLGLTAFGVYTAF).

The protein belongs to the PsbN family.

The protein localises to the cellular thylakoid membrane. Functionally, may play a role in photosystem I and II biogenesis. In Prochlorococcus marinus (strain SARG / CCMP1375 / SS120), this protein is Protein PsbN.